We begin with the raw amino-acid sequence, 506 residues long: UDP-N-acetylglucosamine--peptide N-acetylglucosaminyltransferase GtfA subunit (506 aa).

UDP is bound at residue 16–19; sequence GVEY. H241 contributes to the N-acetyl-D-glucosamine binding site. 384 to 385 is a UDP binding site; sequence HK. Residue 404–407 coordinates N-acetyl-D-glucosamine; it reads EGFG.

It belongs to the glycosyltransferase group 1 family. Glycosyltransferase 4 subfamily. In terms of assembly, interacts with stabilizing protein GtfB (Gtf2), probably as a heterotetramer with 2 subunits each of GtfA and GtfB, part of the accessory SecA2/SecY2 protein translocation apparatus.

The protein resides in the cytoplasm. The protein localises to the cell membrane. It carries out the reaction L-seryl-[protein] + UDP-N-acetyl-alpha-D-glucosamine = 3-O-[N-acetyl-alpha-D-glucosaminyl]-L-seryl-[protein] + UDP + H(+). It functions in the pathway protein modification; protein glycosylation. Its function is as follows. Required for polymorphic O-glycosylation of the serine-rich repeat protein Srr2. Catalyzes the first step in glycosylation by transferring N-acetylglucosamine from UDP-GlcNAc to serine residues of Srr2. Part of the accessory SecA2/SecY2 system specifically required to export serine-rich repeat proteins, probably Srr2 in this organism. The GtfA-GtfB (Gtf1-Gtf2 in this bacteria) complex adds GlcNAc from UDP-GlcNAc to Srr2 substrate. This subunit has low glycosyltransferase activity; GtfB enhances glycosyltransferase activity in vitro. Upon expression in S.parasanguis GtfA/GtfB restores expression of serine-rich repeat protein Fap1 and complements a biofilm formation defect. In Streptococcus agalactiae, this protein is UDP-N-acetylglucosamine--peptide N-acetylglucosaminyltransferase GtfA subunit.